The primary structure comprises 134 residues: Small ribosomal subunit protein uS12 (134 aa).

The interval 1–26 is disordered; the sequence is MPTIQQLVRKGRESFADKSKSPALNS. Over residues 10-20 the composition is skewed to basic and acidic residues; it reads KGRESFADKSK. A 3-methylthioaspartic acid modification is found at D89. Residues 103 to 134 form a disordered region; sequence DTAGVNGRTQRRSKYGAKRPKPGQAPAAKGKK. Positions 111 to 123 are enriched in basic residues; it reads TQRRSKYGAKRPK. The span at 124–134 shows a compositional bias: low complexity; the sequence is PGQAPAAKGKK.

Belongs to the universal ribosomal protein uS12 family. In terms of assembly, part of the 30S ribosomal subunit. Contacts proteins S8 and S17. May interact with IF1 in the 30S initiation complex.

Functionally, with S4 and S5 plays an important role in translational accuracy. In terms of biological role, interacts with and stabilizes bases of the 16S rRNA that are involved in tRNA selection in the A site and with the mRNA backbone. Located at the interface of the 30S and 50S subunits, it traverses the body of the 30S subunit contacting proteins on the other side and probably holding the rRNA structure together. The combined cluster of proteins S8, S12 and S17 appears to hold together the shoulder and platform of the 30S subunit. The chain is Small ribosomal subunit protein uS12 from Porphyromonas gingivalis (strain ATCC BAA-308 / W83).